The chain runs to 102 residues: NADH-quinone oxidoreductase subunit K (102 aa).

3 helical membrane-spanning segments follow: residues Leu-5 to Leu-25, Ile-31 to Phe-51, and Phe-66 to Phe-86.

Belongs to the complex I subunit 4L family. As to quaternary structure, NDH-1 is composed of 14 different subunits. Subunits NuoA, H, J, K, L, M, N constitute the membrane sector of the complex.

It is found in the cell inner membrane. The catalysed reaction is a quinone + NADH + 5 H(+)(in) = a quinol + NAD(+) + 4 H(+)(out). Functionally, NDH-1 shuttles electrons from NADH, via FMN and iron-sulfur (Fe-S) centers, to quinones in the respiratory chain. The immediate electron acceptor for the enzyme in this species is believed to be ubiquinone. Couples the redox reaction to proton translocation (for every two electrons transferred, four hydrogen ions are translocated across the cytoplasmic membrane), and thus conserves the redox energy in a proton gradient. The sequence is that of NADH-quinone oxidoreductase subunit K from Parvibaculum lavamentivorans (strain DS-1 / DSM 13023 / NCIMB 13966).